A 413-amino-acid chain; its full sequence is Histidine--tRNA ligase (413 aa).

Belongs to the class-II aminoacyl-tRNA synthetase family. As to quaternary structure, homodimer.

It localises to the cytoplasm. It carries out the reaction tRNA(His) + L-histidine + ATP = L-histidyl-tRNA(His) + AMP + diphosphate + H(+). This is Histidine--tRNA ligase from Neorickettsia sennetsu (strain ATCC VR-367 / Miyayama) (Ehrlichia sennetsu).